The sequence spans 344 residues: Heat-inducible transcription repressor HrcA (344 aa).

The protein belongs to the HrcA family.

In terms of biological role, negative regulator of class I heat shock genes (grpE-dnaK-dnaJ and groELS operons). Prevents heat-shock induction of these operons. In Streptococcus sanguinis (strain SK36), this protein is Heat-inducible transcription repressor HrcA.